Reading from the N-terminus, the 241-residue chain is Xyloglucan-specific endo-beta-1,4-glucanase 1 (241 aa).

An N-terminal signal peptide occupies residues 1–19 (MKGFFAGVVAAATLAVASA). Glu136 is a catalytic residue. 2 N-linked (GlcNAc...) asparagine glycosylation sites follow: Asn174 and Asn190. Glu222 is a catalytic residue.

Belongs to the glycosyl hydrolase 12 (cellulase H) family. In terms of assembly, interacts with host apoplastic glucanase inhibitor GIP1.

The protein resides in the secreted. Its subcellular location is the host. The enzyme catalyses xyloglucan + H2O = xyloglucan oligosaccharides.. The xyloglucanase activity is inhibited by the binding of the host apoplastic glucanase inhibitor GIP1. In terms of biological role, glycoside hydrolase that exhibits xyloglucanase activity. Acts as an important virulence factor during P.sojae infection but also acts as a pathogen-associated molecular pattern (PAMP) in soybean and solanaceous species, where it can trigger defense responses including cell death. XEG1-induced cell death can be suppressed by P.sojae RxLR effectors. The PAMP activity is independent of its xyloglucanase activity. XEG1 induces plant defense responses in a RLP kinase Serk3/Bak1-dependent manner in Nicotiana benthamiana. Moreover, the perception of XEG1 occurs independently of the perception of ethylene-inducing xylanase Eix2 in Tomato. With truncated paralog XLP1, is required to elevate apoplastic sugar during P.sojae infection. The polypeptide is Xyloglucan-specific endo-beta-1,4-glucanase 1 (Phytophthora sojae (strain P6497) (Soybean stem and root rot agent)).